Consider the following 196-residue polypeptide: Rho-related protein racL (196 aa).

10 to 17 (GDGAVGKT) contributes to the GTP binding site. Positions 32–40 (YQPTVFDNF) match the Effector region motif. Residues 57–61 (DTAGQ) and 116–119 (TQND) each bind GTP. Cysteine methyl ester is present on Cys-193. Cys-193 carries the S-geranylgeranyl cysteine lipid modification. Residues 194 to 196 (IIL) constitute a propeptide, removed in mature form.

This sequence belongs to the small GTPase superfamily. Rho family.

It localises to the cell membrane. The polypeptide is Rho-related protein racL (racL) (Dictyostelium discoideum (Social amoeba)).